Consider the following 792-residue polypeptide: Phenylalanine--tRNA ligase beta subunit (792 aa).

Residues 39–150 (GDEITNVVTG…ENTPIGKDIK (112 aa)) form the tRNA-binding domain. One can recognise a B5 domain in the interval 404–479 (SEPNIVEVDY…RIYGYNKVPS (76 aa)). Mg(2+) is bound by residues aspartate 457, aspartate 463, glutamate 466, and glutamate 467. Residues 699-792 (PKFPTVTRDI…LEHVLGAELR (94 aa)) form the FDX-ACB domain.

The protein belongs to the phenylalanyl-tRNA synthetase beta subunit family. Type 1 subfamily. In terms of assembly, tetramer of two alpha and two beta subunits. Mg(2+) serves as cofactor.

Its subcellular location is the cytoplasm. It catalyses the reaction tRNA(Phe) + L-phenylalanine + ATP = L-phenylalanyl-tRNA(Phe) + AMP + diphosphate + H(+). The chain is Phenylalanine--tRNA ligase beta subunit from Clostridium acetobutylicum (strain ATCC 824 / DSM 792 / JCM 1419 / IAM 19013 / LMG 5710 / NBRC 13948 / NRRL B-527 / VKM B-1787 / 2291 / W).